Here is a 538-residue protein sequence, read N- to C-terminus: Succinyl-CoA:acetate CoA-transferase (538 aa).

305–309 contacts CoA; the sequence is GVGSV. Glu-330 (5-glutamyl coenzyme A thioester intermediate) is an active-site residue. 2 residues coordinate CoA: Asn-420 and Gly-424.

This sequence belongs to the acetyl-CoA hydrolase/transferase family.

It catalyses the reaction succinyl-CoA + acetate = succinate + acetyl-CoA. Forms succinyl-CoA from succinate and acetyl-CoA. The polypeptide is Succinyl-CoA:acetate CoA-transferase (Clostridium kluyveri (strain ATCC 8527 / DSM 555 / NBRC 12016 / NCIMB 10680 / K1)).